We begin with the raw amino-acid sequence, 337 residues long: tRNA N6-adenosine threonylcarbamoyltransferase (337 aa).

Fe cation contacts are provided by histidine 111 and histidine 115. Substrate-binding positions include 134–138 (LVSGG), aspartate 167, glycine 180, and asparagine 272. Aspartate 300 contacts Fe cation.

It belongs to the KAE1 / TsaD family. The cofactor is Fe(2+).

It localises to the cytoplasm. The catalysed reaction is L-threonylcarbamoyladenylate + adenosine(37) in tRNA = N(6)-L-threonylcarbamoyladenosine(37) in tRNA + AMP + H(+). Its function is as follows. Required for the formation of a threonylcarbamoyl group on adenosine at position 37 (t(6)A37) in tRNAs that read codons beginning with adenine. Is involved in the transfer of the threonylcarbamoyl moiety of threonylcarbamoyl-AMP (TC-AMP) to the N6 group of A37, together with TsaE and TsaB. TsaD likely plays a direct catalytic role in this reaction. This Photorhabdus laumondii subsp. laumondii (strain DSM 15139 / CIP 105565 / TT01) (Photorhabdus luminescens subsp. laumondii) protein is tRNA N6-adenosine threonylcarbamoyltransferase.